The chain runs to 251 residues: Glucosamine-6-phosphate deaminase (251 aa).

Residue D67 is the Proton acceptor; for enolization step of the active site. Catalysis depends on N136, which acts as the For ring-opening step. H138 acts as the Proton acceptor; for ring-opening step in catalysis. E143 functions as the For ring-opening step in the catalytic mechanism.

The protein belongs to the glucosamine/galactosamine-6-phosphate isomerase family. NagB subfamily.

The enzyme catalyses alpha-D-glucosamine 6-phosphate + H2O = beta-D-fructose 6-phosphate + NH4(+). It functions in the pathway amino-sugar metabolism; N-acetylneuraminate degradation; D-fructose 6-phosphate from N-acetylneuraminate: step 5/5. Its function is as follows. Catalyzes the reversible isomerization-deamination of glucosamine 6-phosphate (GlcN6P) to form fructose 6-phosphate (Fru6P) and ammonium ion. The sequence is that of Glucosamine-6-phosphate deaminase from Geobacillus sp. (strain WCH70).